The primary structure comprises 849 residues: Disks large homolog 3 (849 aa).

The disordered stretch occupies residues 32 to 101 (DWQVPDPYGP…GKNTPKLNGS (70 aa)). Over residues 41 to 53 (PSGGNGASSGYGG) the composition is skewed to gly residues. The span at 57-69 (QTLPSQAGATPTP) shows a compositional bias: polar residues. PDZ domains are found at residues 149-235 (EIVL…VRRR), 244-330 (EVNL…VAKP), and 404-484 (KIIL…AQYR). Position 157 is a phosphoserine (S157). The SH3 domain maps to 519-589 (KRSLYVRALF…PSKKRVEKKE (71 aa)). Residues 659 to 834 (ARPVIILGPM…IYNKIKQIIE (176 aa)) form the Guanylate kinase-like domain. At Y705 the chain carries Phosphotyrosine.

This sequence belongs to the MAGUK family. As to quaternary structure, interacts through its PDZ domains with NETO1 and APC. Interacts through its first two PDZ domains with ERBB4. Interacts through its third PDZ domain with NLGN1, and probably with NLGN2 and NLGN3. Interacts through its PDZ domains with GRIN2B and SYNGAP1. Interacts through its guanylate kinase-like domain with DLGAP1, DLGAP2, DLGAP3 and DLGAP4. Interacts with FRMPD4 (via C-terminus). Interacts with LRFN2. Interacts with LRFN1 and LRFN4. Interacts with FLTP. Interacts with DGKI (via PDZ-binding motif).

Its function is as follows. Required for learning most likely through its role in synaptic plasticity following NMDA receptor signaling. The chain is Disks large homolog 3 (Dlg3) from Rattus norvegicus (Rat).